A 445-amino-acid chain; its full sequence is CBL-interacting protein kinase 3 (445 aa).

The 256-residue stretch at 19-274 folds into the Protein kinase domain; that stretch reads YELGRAIGQG…TSQVLQDQWF (256 aa). ATP-binding positions include 25–33 and K48; that span reads IGQGTFAKV. The Proton acceptor role is filled by D142. The segment at 160-189 is activation loop; it reads DFGLSAISEQVKADGLLHTTCGTPNYVAPE. The region spanning 309-336 is the NAF domain; that stretch reads AMEEQPTLMNAFELISLNKGLNLDNFFE. Residues 342–371 form a PPI region; sequence KRETRFTSQCPPKEIINRIEEAANLLGFNI.

It belongs to the protein kinase superfamily. CAMK Ser/Thr protein kinase family. SNF1 subfamily. Mn(2+) serves as cofactor.

It carries out the reaction L-seryl-[protein] + ATP = O-phospho-L-seryl-[protein] + ADP + H(+). It catalyses the reaction L-threonyl-[protein] + ATP = O-phospho-L-threonyl-[protein] + ADP + H(+). Functionally, CIPK serine-threonine protein kinases interact with CBL proteins. Binding of a CBL protein to the regulatory NAF domain of CIPK protein lead to the activation of the kinase in a calcium-dependent manner. This is CBL-interacting protein kinase 3 (CIPK3) from Oryza sativa subsp. japonica (Rice).